Consider the following 370-residue polypeptide: Aldo-keto reductase dtxS3 (370 aa).

Asp-78 serves as a coordination point for NADP(+). The active-site Proton donor is Tyr-83. His-174 serves as a coordination point for substrate. NADP(+) contacts are provided by residues 204-205 (SS), Gln-230, 259-269 (GPLASGRLARR), and 333-341 (GSVGRIEEA).

The protein belongs to the aldo/keto reductase family.

The protein operates within secondary metabolite biosynthesis. Its function is as follows. Aldo-keto reductase; part of the gene cluster that mediates the biosynthesis of destruxins, insecticidal cyclic hexadepsipeptides which induce flaccid paralysis and visceral muscle contraction in insects through targeting the calcium channels and vacuolar-type ATPases. The aldo-keto reductase dtxS3 converts alpha-ketoisocaproic acid from deaminated leucine into alpha-hydroxyisocaproic acid (HIC), which is the first substrate for destruxin assembly by dtxS1. L-aspartate decarboxylase dtxS4 converts aspartic acid into beta-alanine, the last substrate for the destruxin assembly line performed by dtxS1. The nonribosomal peptide synthetase dtxS1 synthesizes destruxins B and B2, whereas the cytochrome P450 monooxygenase dtxS2 is required to convert destruxin B into other destruxin derivatives, including destructins C, D, A and E. Destruxin E-diol (ED) is further produced in a non-enzymatic manner from destruxin E. Destruxins play an important role in virulence and escape from insect host immune defenses. This chain is Aldo-keto reductase dtxS3, found in Metarhizium robertsii (strain ARSEF 23 / ATCC MYA-3075) (Metarhizium anisopliae (strain ARSEF 23)).